The sequence spans 115 residues: Phosphoribosyl-ATP pyrophosphatase (115 aa).

This sequence belongs to the PRA-PH family.

The protein localises to the cytoplasm. It catalyses the reaction 1-(5-phospho-beta-D-ribosyl)-ATP + H2O = 1-(5-phospho-beta-D-ribosyl)-5'-AMP + diphosphate + H(+). The protein operates within amino-acid biosynthesis; L-histidine biosynthesis; L-histidine from 5-phospho-alpha-D-ribose 1-diphosphate: step 2/9. The protein is Phosphoribosyl-ATP pyrophosphatase of Bordetella parapertussis (strain 12822 / ATCC BAA-587 / NCTC 13253).